Reading from the N-terminus, the 706-residue chain is Alpha-hemolysin translocation ATP-binding protein HlyB (706 aa).

The 125-residue stretch at 1 to 125 (MMSKCSSHNS…KLYQGKVILV (125 aa)) folds into the Peptidase C39 domain. H83 is a catalytic residue. The next 5 helical transmembrane spans lie at 153–173 (ILLE…ITPL), 191–211 (LNII…LTGA), 269–289 (ALTS…MWYY), 295–315 (LVIL…SPLL), and 388–408 (VMVI…ISIG). One can recognise an ABC transmembrane type-1 domain in the interval 154-436 (LLEVLTVSAF…LAHLWQDFQQ (283 aa)). The 236-residue stretch at 468–703 (IEFKNVRFRY…KDSLYAYLYQ (236 aa)) folds into the ABC transporter domain. Residue 502 to 509 (GRSGSGKS) participates in ATP binding.

Belongs to the ABC transporter superfamily. Protein-1 exporter (TC 3.A.1.109) family. As to quaternary structure, homodimer.

It is found in the cell inner membrane. In terms of biological role, part of the ABC transporter complex HlyBD involved in hemolysin export. Transmembrane domains (TMD) form a pore in the inner membrane and the ATP-binding domain (NBD) is responsible for energy generation. The sequence is that of Alpha-hemolysin translocation ATP-binding protein HlyB (hlyB) from Escherichia coli O157:H7.